Consider the following 154-residue polypeptide: Small ribosomal subunit protein bS6 (154 aa).

The disordered stretch occupies residues 94-154; it reads VKQEGPLPTP…SSQGKESQKS (61 aa). The span at 103–112 shows a compositional bias: polar residues; that stretch reads PRSSNKGYNQ. Residues 113-139 are compositionally biased toward basic and acidic residues; that stretch reads SEKKDIESIDSTNKSEFKEEANDKKTA. Polar residues predominate over residues 140–154; sequence TSESTSSQGKESQKS.

It belongs to the bacterial ribosomal protein bS6 family.

In terms of biological role, binds together with bS18 to 16S ribosomal RNA. This Prochlorococcus marinus subsp. pastoris (strain CCMP1986 / NIES-2087 / MED4) protein is Small ribosomal subunit protein bS6.